Here is a 766-residue protein sequence, read N- to C-terminus: BMP/retinoic acid-inducible neural-specific protein 3 (766 aa).

A signal peptide spans Met1 to Ala33. The region spanning Arg74–Ala264 is the MACPF domain. Residues Asn168, Asn337, Asn456, Asn562, Asn609, and Asn641 are each glycosylated (N-linked (GlcNAc...) asparagine).

This sequence belongs to the BRINP family. In terms of tissue distribution, strongly expressed in oral keratinocytes compared to the weak expression in tongue squamous cell carcinoma (SCC). Expressed in endothelial and aortic smooth muscle cells. Overexpressed in gonadotropinomas compared to normal pituitarie tissues.

The protein localises to the secreted. It localises to the mitochondrion. In terms of biological role, inhibits neuronal cell proliferation by negative regulation of the cell cycle transition. Promotes pituitary gonadotrope cell proliferation, migration and invasion, when overexpressed. May play a role in cell pituitary tumor development. The protein is BMP/retinoic acid-inducible neural-specific protein 3 (BRINP3) of Homo sapiens (Human).